The sequence spans 164 residues: Xanthine-guanine phosphoribosyltransferase (164 aa).

Residues 41-42 and 98-106 contribute to the 5-phospho-alpha-D-ribose 1-diphosphate site; these read RG and DDLTDTGKT. D99 contacts Mg(2+). Positions 102 and 145 each coordinate guanine. The xanthine site is built by D102 and I145. Residues 102–106 and 144–145 contribute to the GMP site; these read DTGKT and WI.

Belongs to the purine/pyrimidine phosphoribosyltransferase family. XGPT subfamily. Homotetramer. Mg(2+) is required as a cofactor.

It is found in the cell inner membrane. It catalyses the reaction GMP + diphosphate = guanine + 5-phospho-alpha-D-ribose 1-diphosphate. The enzyme catalyses XMP + diphosphate = xanthine + 5-phospho-alpha-D-ribose 1-diphosphate. The catalysed reaction is IMP + diphosphate = hypoxanthine + 5-phospho-alpha-D-ribose 1-diphosphate. The protein operates within purine metabolism; GMP biosynthesis via salvage pathway; GMP from guanine: step 1/1. It participates in purine metabolism; XMP biosynthesis via salvage pathway; XMP from xanthine: step 1/1. Its function is as follows. Purine salvage pathway enzyme that catalyzes the transfer of the ribosyl-5-phosphate group from 5-phospho-alpha-D-ribose 1-diphosphate (PRPP) to the N9 position of the 6-oxopurines guanine and xanthine to form the corresponding ribonucleotides GMP (guanosine 5'-monophosphate) and XMP (xanthosine 5'-monophosphate), with the release of PPi. To a lesser extent, also acts on hypoxanthine. The protein is Xanthine-guanine phosphoribosyltransferase of Rhizobium johnstonii (strain DSM 114642 / LMG 32736 / 3841) (Rhizobium leguminosarum bv. viciae).